The following is a 556-amino-acid chain: Oxygen-dependent choline dehydrogenase (556 aa).

Residue 6–35 (DYIIIGAGSAGNVLAARLTEDPGVTVLLLE) coordinates FAD. His475 acts as the Proton acceptor in catalysis.

This sequence belongs to the GMC oxidoreductase family. FAD serves as cofactor.

The catalysed reaction is choline + A = betaine aldehyde + AH2. It carries out the reaction betaine aldehyde + NAD(+) + H2O = glycine betaine + NADH + 2 H(+). Its pathway is amine and polyamine biosynthesis; betaine biosynthesis via choline pathway; betaine aldehyde from choline (cytochrome c reductase route): step 1/1. Its function is as follows. Involved in the biosynthesis of the osmoprotectant glycine betaine. Catalyzes the oxidation of choline to betaine aldehyde and betaine aldehyde to glycine betaine at the same rate. This Xanthomonas euvesicatoria pv. vesicatoria (strain 85-10) (Xanthomonas campestris pv. vesicatoria) protein is Oxygen-dependent choline dehydrogenase.